The chain runs to 342 residues: RNA 3'-terminal phosphate cyclase (342 aa).

Residues glutamine 100 and 283–287 (FLGDQ) contribute to the ATP site. The Tele-AMP-histidine intermediate role is filled by histidine 307.

The protein belongs to the RNA 3'-terminal cyclase family. Type 1 subfamily.

The protein resides in the cytoplasm. It carries out the reaction a 3'-end 3'-phospho-ribonucleotide-RNA + ATP = a 3'-end 2',3'-cyclophospho-ribonucleotide-RNA + AMP + diphosphate. Its function is as follows. Catalyzes the conversion of 3'-phosphate to a 2',3'-cyclic phosphodiester at the end of RNA. The mechanism of action of the enzyme occurs in 3 steps: (A) adenylation of the enzyme by ATP; (B) transfer of adenylate to an RNA-N3'P to produce RNA-N3'PP5'A; (C) and attack of the adjacent 2'-hydroxyl on the 3'-phosphorus in the diester linkage to produce the cyclic end product. The biological role of this enzyme is unknown but it is likely to function in some aspects of cellular RNA processing. In Pyrococcus abyssi (strain GE5 / Orsay), this protein is RNA 3'-terminal phosphate cyclase (rtcA).